A 252-amino-acid chain; its full sequence is Chitooligosaccharide deacetylase (252 aa).

Mg(2+)-binding residues include His61 and His125.

It belongs to the YdjC deacetylase family. ChbG subfamily. Homodimer. Mg(2+) is required as a cofactor.

The protein localises to the cytoplasm. It carries out the reaction N,N'-diacetylchitobiose + H2O = N-acetyl-beta-D-glucosaminyl-(1-&gt;4)-D-glucosamine + acetate. The enzyme catalyses diacetylchitobiose-6'-phosphate + H2O = N'-monoacetylchitobiose-6'-phosphate + acetate. Its pathway is glycan degradation; chitin degradation. Functionally, involved in the degradation of chitin. ChbG is essential for growth on the acetylated chitooligosaccharides chitobiose and chitotriose but is dispensable for growth on cellobiose and chitosan dimer, the deacetylated form of chitobiose. Deacetylation of chitobiose-6-P and chitotriose-6-P is necessary for both the activation of the chb promoter by the regulatory protein ChbR and the hydrolysis of phosphorylated beta-glucosides by the phospho-beta-glucosidase ChbF. Catalyzes the removal of only one acetyl group from chitobiose-6-P to yield monoacetylchitobiose-6-P, the inducer of ChbR and the substrate of ChbF. The protein is Chitooligosaccharide deacetylase of Salmonella dublin (strain CT_02021853).